The chain runs to 235 residues: 7-carboxy-7-deazaguanine synthase (235 aa).

Substrate-binding positions include 27–29 and arginine 42; that span reads LQG. A Radical SAM core domain is found at 33-235; that stretch reads FSGQPSVFVR…VQVHKILKIA (203 aa). Positions 46, 50, and 53 each coordinate [4Fe-4S] cluster. Threonine 55 contacts Mg(2+). Threonine 87 is a binding site for substrate. Residues glycine 89 and 133-135 each bind S-adenosyl-L-methionine; that span reads SPK.

Belongs to the radical SAM superfamily. 7-carboxy-7-deazaguanine synthase family. In terms of assembly, homodimer. [4Fe-4S] cluster serves as cofactor. It depends on S-adenosyl-L-methionine as a cofactor. Mg(2+) is required as a cofactor.

The catalysed reaction is 6-carboxy-5,6,7,8-tetrahydropterin + H(+) = 7-carboxy-7-deazaguanine + NH4(+). It participates in purine metabolism; 7-cyano-7-deazaguanine biosynthesis. Functionally, catalyzes the complex heterocyclic radical-mediated conversion of 6-carboxy-5,6,7,8-tetrahydropterin (CPH4) to 7-carboxy-7-deazaguanine (CDG), a step common to the biosynthetic pathways of all 7-deazapurine-containing compounds. The sequence is that of 7-carboxy-7-deazaguanine synthase from Rhodospirillum rubrum (strain ATCC 11170 / ATH 1.1.1 / DSM 467 / LMG 4362 / NCIMB 8255 / S1).